We begin with the raw amino-acid sequence, 236 residues long: MTRRYWNINLKEMIEAGVHFGHGIKKWNPKMAPYISAKRKGTHIINLARTARFLSEACDLVFDAASQGKSFLIVGTKKRATDLVASAAIRARCHYVNKKWFSGMLTNWSITKTRLSQFRDLRAEEKMGKFQHLPKRDVAILKRKLSTLQRYLGGIKYMTRLPDIVIVLDQQKEYIALRECAILGIPTISLVDTNCDPDLANISIPANDDTMTSIRLILNKLVFAICEGRSLYIRNH.

The protein belongs to the universal ribosomal protein uS2 family.

The protein localises to the plastid. Its subcellular location is the chloroplast. In Agrostis stolonifera (Creeping bentgrass), this protein is Small ribosomal subunit protein uS2c (rps2).